Reading from the N-terminus, the 874-residue chain is Alanine--tRNA ligase (874 aa).

Residues histidine 562, histidine 566, cysteine 663, and histidine 667 each contribute to the Zn(2+) site.

The protein belongs to the class-II aminoacyl-tRNA synthetase family. The cofactor is Zn(2+).

It localises to the cytoplasm. It catalyses the reaction tRNA(Ala) + L-alanine + ATP = L-alanyl-tRNA(Ala) + AMP + diphosphate. In terms of biological role, catalyzes the attachment of alanine to tRNA(Ala) in a two-step reaction: alanine is first activated by ATP to form Ala-AMP and then transferred to the acceptor end of tRNA(Ala). Also edits incorrectly charged Ser-tRNA(Ala) and Gly-tRNA(Ala) via its editing domain. The protein is Alanine--tRNA ligase of Bordetella parapertussis (strain 12822 / ATCC BAA-587 / NCTC 13253).